The chain runs to 395 residues: Phosphoglycerate kinase (395 aa).

Substrate is bound by residues 20-22, Arg-36, 59-62, Arg-120, and Arg-157; these read DFN and HLGR. ATP contacts are provided by residues Lys-208, Gly-296, Glu-327, and 353 to 356; that span reads GGDT.

The protein belongs to the phosphoglycerate kinase family. As to quaternary structure, monomer.

Its subcellular location is the cytoplasm. The enzyme catalyses (2R)-3-phosphoglycerate + ATP = (2R)-3-phospho-glyceroyl phosphate + ADP. Its pathway is carbohydrate degradation; glycolysis; pyruvate from D-glyceraldehyde 3-phosphate: step 2/5. The protein is Phosphoglycerate kinase of Tropheryma whipplei (strain Twist) (Whipple's bacillus).